The chain runs to 465 residues: Ribulose bisphosphate carboxylase large chain (465 aa).

An N6,N6,N6-trimethyllysine modification is found at lysine 4. The substrate site is built by asparagine 113 and threonine 163. The Proton acceptor role is filled by lysine 165. Lysine 167 contributes to the substrate binding site. Positions 191, 193, and 194 each coordinate Mg(2+). The residue at position 191 (lysine 191) is an N6-carboxylysine. The Proton acceptor role is filled by histidine 284. Substrate contacts are provided by arginine 285, histidine 317, and serine 369.

It belongs to the RuBisCO large chain family. Type I subfamily. Heterohexadecamer of 8 large chains and 8 small chains; disulfide-linked. The disulfide link is formed within the large subunit homodimers. It depends on Mg(2+) as a cofactor. In terms of processing, the disulfide bond which can form in the large chain dimeric partners within the hexadecamer appears to be associated with oxidative stress and protein turnover.

It is found in the plastid. Its subcellular location is the chloroplast. The enzyme catalyses 2 (2R)-3-phosphoglycerate + 2 H(+) = D-ribulose 1,5-bisphosphate + CO2 + H2O. It carries out the reaction D-ribulose 1,5-bisphosphate + O2 = 2-phosphoglycolate + (2R)-3-phosphoglycerate + 2 H(+). Its function is as follows. RuBisCO catalyzes two reactions: the carboxylation of D-ribulose 1,5-bisphosphate, the primary event in carbon dioxide fixation, as well as the oxidative fragmentation of the pentose substrate in the photorespiration process. Both reactions occur simultaneously and in competition at the same active site. This is Ribulose bisphosphate carboxylase large chain from Cassia fistula (Golden shower tree).